A 761-amino-acid polypeptide reads, in one-letter code: Protein spire homolog 1 (761 aa).

2 disordered regions span residues 1-23 and 160-183; these read MTDG…ARPE and DCPD…AEVS. The KIND domain maps to 36–223; the sequence is LCLEEILTLY…RALYAETKEL (188 aa). Residues 160 to 180 are compositionally biased toward acidic residues; sequence DCPDEGYEATEEEDEGEEENA. A coiled-coil region spans residues 218–246; it reads AETKELRTFLEKIKSAKENLRKMEGETEE. 2 consecutive WH2 domains span residues 295–313 and 359–376; these read PYEM…LRKV and LHER…LRPV. 2 disordered regions span residues 375-406 and 419-539; these read PVSP…DIPD and ANGT…KSLA. A compositionally biased stretch (low complexity) spans 469-480; the sequence is SSSSISTSLVED. Basic and acidic residues predominate over residues 504-520; the sequence is PDKRIAPQRRHSIEKEA. Residues 557–577 form a spir-box region; sequence LTLTVEEVMHIRQVLVKAELE. Disordered regions lie at residues 630–694 and 728–761; these read PSKP…DELE and STKR…IKEV. A compositionally biased stretch (low complexity) spans 636–647; it reads SLPISSLGPSIL. Over residues 682-693 the composition is skewed to basic and acidic residues; sequence KHGDRSSSKDEL. Positions 728 to 739 are enriched in basic residues; that stretch reads STKRARLHRRTH. Positions 740–749 are enriched in low complexity; the sequence is SVYSSSTSSS.

It belongs to the spire family.

The protein resides in the cytoplasm. It localises to the cytoskeleton. Its subcellular location is the cytosol. It is found in the cleavage furrow. The protein localises to the perinuclear region. The protein resides in the cell membrane. It localises to the cytoplasmic vesicle membrane. Its function is as follows. Acts as an actin nucleation factor, remains associated with the slow-growing pointed end of the new filament. Involved in intracellular vesicle transport along actin fibers, providing a novel link between actin cytoskeleton dynamics and intracellular transport. Required for asymmetric spindle positioning and asymmetric cell division during meiosis. Required for normal formation of the cleavage furrow and for polar body extrusion during female germ cell meiosis. Also acts in the nucleus: together with FMN2, promotes assembly of nuclear actin filaments in response to DNA damage in order to facilitate movement of chromatin and repair factors after DNA damage. In addition, promotes innate immune signaling downstream of dsRNA sensing. Mechanistically, contributes to IRF3 phosphorylation and activation downstream of MAVS and upstream of TBK1. The chain is Protein spire homolog 1 from Danio rerio (Zebrafish).